The chain runs to 494 residues: Probable cytosol aminopeptidase (494 aa).

Lys260 and Asp265 together coordinate Mn(2+). Lys272 is a catalytic residue. 3 residues coordinate Mn(2+): Asp283, Asp342, and Glu344. Residue Arg346 is part of the active site.

This sequence belongs to the peptidase M17 family. Mn(2+) is required as a cofactor.

It is found in the cytoplasm. It carries out the reaction Release of an N-terminal amino acid, Xaa-|-Yaa-, in which Xaa is preferably Leu, but may be other amino acids including Pro although not Arg or Lys, and Yaa may be Pro. Amino acid amides and methyl esters are also readily hydrolyzed, but rates on arylamides are exceedingly low.. The catalysed reaction is Release of an N-terminal amino acid, preferentially leucine, but not glutamic or aspartic acids.. Its function is as follows. Presumably involved in the processing and regular turnover of intracellular proteins. Catalyzes the removal of unsubstituted N-terminal amino acids from various peptides. The sequence is that of Probable cytosol aminopeptidase from Bacillus thuringiensis subsp. konkukian (strain 97-27).